Consider the following 280-residue polypeptide: Probable endonuclease 4 (280 aa).

His-77, His-117, Glu-148, Asp-180, His-183, His-215, Asp-228, His-230, and Glu-259 together coordinate Zn(2+).

It belongs to the AP endonuclease 2 family. Zn(2+) is required as a cofactor.

It carries out the reaction Endonucleolytic cleavage to 5'-phosphooligonucleotide end-products.. Functionally, endonuclease IV plays a role in DNA repair. It cleaves phosphodiester bonds at apurinic or apyrimidinic (AP) sites, generating a 3'-hydroxyl group and a 5'-terminal sugar phosphate. In Thermoplasma volcanium (strain ATCC 51530 / DSM 4299 / JCM 9571 / NBRC 15438 / GSS1), this protein is Probable endonuclease 4.